A 229-amino-acid polypeptide reads, in one-letter code: Glutathione S-transferase 3 (229 aa).

The residue at position 2 (A2) is a Blocked amino end (Ala). Residues 3 to 83 (AKPVLYYFNG…YIAGKYNLYG (81 aa)) enclose the GST N-terminal domain. Residues Y9, 54-55 (QV), and 67-68 (QT) contribute to the glutathione site. The 123-residue stretch at 85–207 (DLKERALIDM…LAPGSKRKPI (123 aa)) folds into the GST C-terminal domain.

The protein belongs to the GST superfamily. Alpha family. In terms of assembly, homodimer or heterodimer (with a subunit from group CL-4).

The protein resides in the cytoplasm. The catalysed reaction is RX + glutathione = an S-substituted glutathione + a halide anion + H(+). Functionally, catalyzes the conjugation of GSH to a wide variety of electrophilic alkylating agents. Also involved in the metabolism of lipid hydroperoxides, prostaglandins and leukotriene A4 and in binding of non-substrate hydrophobic ligands such as bile acids, a number of drugs and thyroid hormones. This GST does not exhibit peroxidase activity. The chain is Glutathione S-transferase 3 from Gallus gallus (Chicken).